We begin with the raw amino-acid sequence, 288 residues long: Orotidine 5'-phosphate decarboxylase (288 aa).

Residue Lys-99 is the Proton donor of the active site.

Belongs to the OMP decarboxylase family. Type 2 subfamily.

It carries out the reaction orotidine 5'-phosphate + H(+) = UMP + CO2. The protein operates within pyrimidine metabolism; UMP biosynthesis via de novo pathway; UMP from orotate: step 2/2. The chain is Orotidine 5'-phosphate decarboxylase (pyrF) from Myxococcus xanthus (strain DK1622).